Here is a 362-residue protein sequence, read N- to C-terminus: Histidine biosynthesis bifunctional protein HisB (362 aa).

Positions 1–173 are histidinol-phosphatase; that stretch reads MQPTLFIDRD…TVTNCGKRPP (173 aa). Asp8 functions as the Nucleophile in the catalytic mechanism. Mg(2+) is bound by residues Asp8 and Asp10. The active-site Proton donor is Asp10. Residues Cys91, His93, Cys99, and Cys101 each coordinate Zn(2+). Mg(2+) is bound at residue Asp128. The interval 174-362 is imidazoleglycerol-phosphate dehydratase; the sequence is RFAEVIRQTK…NEMPSSKGVL (189 aa).

This sequence in the N-terminal section; belongs to the histidinol-phosphatase family. The protein in the C-terminal section; belongs to the imidazoleglycerol-phosphate dehydratase family. Mg(2+) is required as a cofactor. Requires Zn(2+) as cofactor.

It localises to the cytoplasm. It catalyses the reaction D-erythro-1-(imidazol-4-yl)glycerol 3-phosphate = 3-(imidazol-4-yl)-2-oxopropyl phosphate + H2O. The catalysed reaction is L-histidinol phosphate + H2O = L-histidinol + phosphate. The protein operates within amino-acid biosynthesis; L-histidine biosynthesis; L-histidine from 5-phospho-alpha-D-ribose 1-diphosphate: step 6/9. It participates in amino-acid biosynthesis; L-histidine biosynthesis; L-histidine from 5-phospho-alpha-D-ribose 1-diphosphate: step 8/9. This is Histidine biosynthesis bifunctional protein HisB from Haemophilus influenzae (strain 86-028NP).